The sequence spans 476 residues: Aspartyl/glutamyl-tRNA(Asn/Gln) amidotransferase subunit B (476 aa).

It belongs to the GatB/GatE family. GatB subfamily. In terms of assembly, heterotrimer of A, B and C subunits.

The catalysed reaction is L-glutamyl-tRNA(Gln) + L-glutamine + ATP + H2O = L-glutaminyl-tRNA(Gln) + L-glutamate + ADP + phosphate + H(+). It carries out the reaction L-aspartyl-tRNA(Asn) + L-glutamine + ATP + H2O = L-asparaginyl-tRNA(Asn) + L-glutamate + ADP + phosphate + 2 H(+). Its function is as follows. Allows the formation of correctly charged Asn-tRNA(Asn) or Gln-tRNA(Gln) through the transamidation of misacylated Asp-tRNA(Asn) or Glu-tRNA(Gln) in organisms which lack either or both of asparaginyl-tRNA or glutaminyl-tRNA synthetases. The reaction takes place in the presence of glutamine and ATP through an activated phospho-Asp-tRNA(Asn) or phospho-Glu-tRNA(Gln). The chain is Aspartyl/glutamyl-tRNA(Asn/Gln) amidotransferase subunit B from Lactobacillus helveticus (strain DPC 4571).